Reading from the N-terminus, the 141-residue chain is Nucleoside diphosphate kinase (141 aa).

Residues lysine 11, phenylalanine 59, arginine 87, threonine 93, arginine 104, and asparagine 114 each coordinate ATP. Histidine 117 serves as the catalytic Pros-phosphohistidine intermediate.

The protein belongs to the NDK family. As to quaternary structure, homotetramer. Requires Mg(2+) as cofactor.

Its subcellular location is the cytoplasm. The enzyme catalyses a 2'-deoxyribonucleoside 5'-diphosphate + ATP = a 2'-deoxyribonucleoside 5'-triphosphate + ADP. It catalyses the reaction a ribonucleoside 5'-diphosphate + ATP = a ribonucleoside 5'-triphosphate + ADP. Functionally, major role in the synthesis of nucleoside triphosphates other than ATP. The ATP gamma phosphate is transferred to the NDP beta phosphate via a ping-pong mechanism, using a phosphorylated active-site intermediate. The polypeptide is Nucleoside diphosphate kinase (Histophilus somni (strain 129Pt) (Haemophilus somnus)).